The chain runs to 316 residues: ATP synthase gamma chain (316 aa).

The protein belongs to the ATPase gamma chain family. F-type ATPases have 2 components, CF(1) - the catalytic core - and CF(0) - the membrane proton channel. CF(1) has five subunits: alpha(3), beta(3), gamma(1), delta(1), epsilon(1). CF(0) has three main subunits: a, b and c.

It localises to the cellular thylakoid membrane. In terms of biological role, produces ATP from ADP in the presence of a proton gradient across the membrane. The gamma chain is believed to be important in regulating ATPase activity and the flow of protons through the CF(0) complex. This is ATP synthase gamma chain from Prochlorococcus marinus (strain MIT 9312).